We begin with the raw amino-acid sequence, 446 residues long: Glutamate-1-semialdehyde 2,1-aminomutase (446 aa).

Lysine 278 carries the N6-(pyridoxal phosphate)lysine modification.

Belongs to the class-III pyridoxal-phosphate-dependent aminotransferase family. HemL subfamily. As to quaternary structure, homodimer. The cofactor is pyridoxal 5'-phosphate.

Its subcellular location is the cytoplasm. It catalyses the reaction (S)-4-amino-5-oxopentanoate = 5-aminolevulinate. It participates in porphyrin-containing compound metabolism; protoporphyrin-IX biosynthesis; 5-aminolevulinate from L-glutamyl-tRNA(Glu): step 2/2. The chain is Glutamate-1-semialdehyde 2,1-aminomutase from Deinococcus geothermalis (strain DSM 11300 / CIP 105573 / AG-3a).